We begin with the raw amino-acid sequence, 86 residues long: MATSGRLLCVCLVMGLVFESLGYLTGREKRPAENLEASVQRRWYLNRRYEVDCGGVLCQFGCCEDDRCRELGCEFMDVLSRIRSAE.

A signal peptide spans 1-21; the sequence is MATSGRLLCVCLVMGLVFESL. Positions 22 to 46 are excised as a propeptide; it reads GYLTGREKRPAENLEASVQRRWYLN.

The protein belongs to the teretoxin M (TM) superfamily. In terms of processing, contains 3 disulfide bonds. In terms of tissue distribution, expressed by the venom duct.

It is found in the secreted. In Terebra subulata (Chocolate spotted auger), this protein is Teretoxin Tsu6.16.